The following is a 430-amino-acid chain: Cortical fragment-lytic enzyme (430 aa).

LysM domains lie at 3–47 (QIVT…ALIV) and 52–96 (NNYY…QLYV). The 327-residue stretch at 104-430 (VESIAYLQPS…VENFTITKKG (327 aa)) folds into the GH18 domain. Glutamate 219 (proton donor) is an active-site residue.

Belongs to the glycosyl hydrolase 18 family. Chitinase class II subfamily.

It is found in the spore cortex. Its activity is regulated as follows. Inhibited by diethylpyrocarbonate. Functionally, N-acetylglucosaminidase involved in cortex peptidoglycan degradation during germination. Cleaves only partially degraded spore peptidoglycans. Recognizes muramic acid delta-lactam residues specific to spore peptidoglycans. The protein is Cortical fragment-lytic enzyme of Bacillus cereus.